Reading from the N-terminus, the 477-residue chain is Cysteine--tRNA ligase (477 aa).

Position 29 (Cys29) interacts with Zn(2+). Positions 31–41 (PTVYDFAHIGN) match the 'HIGH' region motif. Positions 224, 249, and 253 each coordinate Zn(2+). The 'KMSKS' region signature appears at 282–286 (KMSKS). Lys285 lines the ATP pocket.

Belongs to the class-I aminoacyl-tRNA synthetase family. In terms of assembly, monomer. The cofactor is Zn(2+).

It localises to the cytoplasm. It catalyses the reaction tRNA(Cys) + L-cysteine + ATP = L-cysteinyl-tRNA(Cys) + AMP + diphosphate. The chain is Cysteine--tRNA ligase from Nitrobacter winogradskyi (strain ATCC 25391 / DSM 10237 / CIP 104748 / NCIMB 11846 / Nb-255).